The primary structure comprises 240 residues: Competence protein ComFC (240 aa).

Belongs to the ComF/GntX family. As to quaternary structure, monomer and dimer in solution. Interacts with ComFA and DprA; ComFA-ComFC form rings about 150 Angstroms in diameter with apparent 6-fold symmetry.

In terms of biological role, involved in transformation (genetic competence for DNA uptake). The polypeptide is Competence protein ComFC (comFC) (Bacillus subtilis (strain 168)).